A 460-amino-acid chain; its full sequence is Serine--tRNA ligase (460 aa).

Residue 255-257 (TAE) participates in L-serine binding. ATP contacts are provided by residues 286-288 (RKE) and Val302. Glu309 contributes to the L-serine binding site. 373-376 (EMVS) is an ATP binding site. L-serine is bound at residue Thr409.

This sequence belongs to the class-II aminoacyl-tRNA synthetase family. Type-1 seryl-tRNA synthetase subfamily. In terms of assembly, homodimer. The tRNA molecule binds across the dimer.

It is found in the cytoplasm. It carries out the reaction tRNA(Ser) + L-serine + ATP = L-seryl-tRNA(Ser) + AMP + diphosphate + H(+). The enzyme catalyses tRNA(Sec) + L-serine + ATP = L-seryl-tRNA(Sec) + AMP + diphosphate + H(+). The protein operates within aminoacyl-tRNA biosynthesis; selenocysteinyl-tRNA(Sec) biosynthesis; L-seryl-tRNA(Sec) from L-serine and tRNA(Sec): step 1/1. Catalyzes the attachment of serine to tRNA(Ser). Is also able to aminoacylate tRNA(Sec) with serine, to form the misacylated tRNA L-seryl-tRNA(Sec), which will be further converted into selenocysteinyl-tRNA(Sec). This Aeropyrum pernix (strain ATCC 700893 / DSM 11879 / JCM 9820 / NBRC 100138 / K1) protein is Serine--tRNA ligase.